We begin with the raw amino-acid sequence, 91 residues long: Small ribosomal subunit protein bS18 (91 aa).

Residues 1-21 (MSDERTPQRSSGPRKKRPFQR) form a disordered region. Basic residues predominate over residues 12–21 (GPRKKRPFQR).

The protein belongs to the bacterial ribosomal protein bS18 family. In terms of assembly, part of the 30S ribosomal subunit. Forms a tight heterodimer with protein bS6.

Functionally, binds as a heterodimer with protein bS6 to the central domain of the 16S rRNA, where it helps stabilize the platform of the 30S subunit. This is Small ribosomal subunit protein bS18 from Geotalea uraniireducens (strain Rf4) (Geobacter uraniireducens).